Consider the following 236-residue polypeptide: Small ribosomal subunit protein uS2c (236 aa).

This sequence belongs to the universal ribosomal protein uS2 family.

Its subcellular location is the plastid. It is found in the chloroplast. This is Small ribosomal subunit protein uS2c (rps2) from Phaseolus vulgaris (Kidney bean).